Reading from the N-terminus, the 1216-residue chain is Phospholipase D B (1216 aa).

Residues Met1–His14 are compositionally biased toward polar residues. The tract at residues Met1–Ser48 is disordered. Residues Gln17 to Arg33 show a composition bias toward basic and acidic residues. 2 consecutive EF-hand domains span residues Arg196–Gly231 and Thr232–Ile267. Residues Asp209, Asn211, Asp213, Lys215, and Glu220 each contribute to the Ca(2+) site. In terms of domain architecture, PH spans Glu347–Arg462. Positions Leu585–Arg612 constitute a PLD phosphodiesterase 1 domain. Residues His590, Lys592, and Asp597 contribute to the active site. The segment at Val732–Asn844 is disordered. Over residues Asn776–Ser789 the composition is skewed to low complexity. Acidic residues predominate over residues Glu790–Lys813. Positions Glu1036–Ser1063 constitute a PLD phosphodiesterase 2 domain. Catalysis depends on residues His1041, Lys1043, and Asp1048.

The protein belongs to the phospholipase D family.

It localises to the cytoplasmic vesicle. It is found in the cytoplasm. The protein resides in the cell cortex. The catalysed reaction is a 1,2-diacyl-sn-glycero-3-phosphocholine + H2O = a 1,2-diacyl-sn-glycero-3-phosphate + choline + H(+). Inhibited by butan-1-ol. Its function is as follows. Plays a role in cell growth. Hydrolyzes membrane phospholipids, such as PtdCho (phosphatidylcholine), producing the free headgroup and PtdOH (phosphatidic acid; signaling molecule on its own). Involved in the inhibition of actin-based motility and endocytosis. Its inhibition causes complete collapse of F-actin organization. Plays an important role in cell migration by localizing along the anterior cell membrane. Overexpression leads to the inability to aggregate even at higher cell density. Also known as a negative regulator of quorum sensing. This Dictyostelium discoideum (Social amoeba) protein is Phospholipase D B (pldB).